The following is a 918-amino-acid chain: UPF0182 protein CPF_0011 (918 aa).

7 helical membrane-spanning segments follow: residues 8–28 (TVLISILLLVVVFFVSTNFII), 46–66 (LIAICKLFVPIFILYFCVIAI), 91–111 (FLLSNLVISILGAGATATTQW), 151–171 (AISLIIILVLITVIIYLALGF), 200–220 (LAVLASVLSLLIGCSYLLKSY), 243–263 (IFYKVIAVACVISSIVVFISI), and 271–291 (IIISIASIAVLIVLEPVVAIF). Basic and acidic residues predominate over residues 857 to 869 (EENKNSNKDETPK). A disordered region spans residues 857-876 (EENKNSNKDETPKNEITSDN).

Belongs to the UPF0182 family.

The protein resides in the cell membrane. The chain is UPF0182 protein CPF_0011 from Clostridium perfringens (strain ATCC 13124 / DSM 756 / JCM 1290 / NCIMB 6125 / NCTC 8237 / Type A).